Here is a 138-residue protein sequence, read N- to C-terminus: Basic phospholipase A2 ammodytoxin A (138 aa).

An N-terminal signal peptide occupies residues 1 to 16 (MRTLWIVAVCLIGVEG). Intrachain disulfides connect cysteine 42/cysteine 131, cysteine 44/cysteine 60, cysteine 59/cysteine 111, cysteine 65/cysteine 138, cysteine 66/cysteine 104, cysteine 73/cysteine 97, and cysteine 91/cysteine 102. Positions 43, 45, and 47 each coordinate Ca(2+). Histidine 63 is a catalytic residue. Position 64 (aspartate 64) interacts with Ca(2+). Aspartate 105 is a catalytic residue.

It belongs to the phospholipase A2 family. Group II subfamily. D49 sub-subfamily. As to quaternary structure, monomer. Binds to calmodulin, coagulation factor X (F10), M-type PLA2 receptor (R-180). May also bind to 14-3-3 proteins gamma (YWHAG) and epsilon (YWHAE), and R25, a mitochondrial membrane protein. Ca(2+) serves as cofactor. In terms of tissue distribution, expressed by the venom gland.

It localises to the secreted. The protein resides in the host cytoplasm. The protein localises to the host cytosol. It carries out the reaction a 1,2-diacyl-sn-glycero-3-phosphocholine + H2O = a 1-acyl-sn-glycero-3-phosphocholine + a fatty acid + H(+). Its function is as follows. Snake venom phospholipase A2 (PLA2) that acts as a presynaptic neurotoxin, an inhibitor of blood coagulation, and has been found to bind with high affinity to intracellular proteins. The response of indirectly stimulated neuromuscular preparations to ammodytoxin (Atx) is triphasic. The first phase, the transient inhibition of the acetylcholine (ACh) release, starts soon after the addition of Atx and lasts for several minutes. This phase is probably independent of Atx enzymatic activity. The effect may be due to the specific binding of the toxin to presynaptic receptors. These receptors, called N-type receptors, are still unidentified. It is noteworthy that a neuronal isoform of the M-type PLA2 receptor (R180) has been identified as a high-affinity receptor for Atx in neuronal plasma membranes. It was demonstrated however that this receptor is not essential for expression of neurotoxicity by Atx. The second phase corresponds to an augmentation of neurotransmitter release. A peak is reached 10-20 minutes after exposure of the preparation to Atx and is followed by a gradual reduction. In this phase, the enzymatic activity of Atx of the mammalian is not significant. It is speculated that the increased release of neurotransmitter in this phase is induced by the interference of Atx with voltage-gated potassium channels. Measurements of ionic currents showed however that voltage-gated potassium channels are not affected by Atx. The third phase of the response of neuromuscular preparations to Atx, which corresponds to a complete and irreversible paralysis, is clearly dependent on the hydrolytic activity of the toxin. In addition to its presynaptic neurotoxicity, Atx shows an anticoagulant activity by binding with high affinity to activated coagulation factor X (F10) thus inhibiting the formation of the prothrombinase complex (FX/FV) and its activity (IC(50) is 20 nM). Surprisingly, Atx was discovered to bind intracellular proteins such as calmodulin (CaM) (IC(50) is 6 nM), 14-3-3 proteins gamma (YWHAG) and epsilon (YWHAE) (by similarity with AtxC), as well as R25 (by similarity with AtxC), a mitochondrial integral membrane protein found in cerebral cortex. These findings raised a doubt about the dogma of the exclusively extracellular action of PLA2s, defended by the potential instability of these molecules in the reducing environment of the eukaryotic cytosol coupled with their possible inability to act as enzymes in this cellular compartment, due to too low concentration of calcium ions. This hypothesis was challenged efficiently by demonstrating the internalization of AtxA into a culture cells, but still remains to be directly demonstrated in vivo. PLA2 catalyzes the calcium-dependent hydrolysis of the 2-acyl groups in 3-sn-phosphoglycerides. The chain is Basic phospholipase A2 ammodytoxin A from Vipera ammodytes ammodytes (Western sand viper).